A 473-amino-acid chain; its full sequence is Photosystem II CP43 reaction center protein (473 aa).

Residues 1-14 constitute a propeptide that is removed on maturation; sequence MKTLYSLRRFYPVE. Thr15 carries the N-acetylthreonine modification. Thr15 is modified (phosphothreonine). The next 5 helical transmembrane spans lie at 69–93, 134–155, 178–200, 255–275, and 291–312; these read LFEV…PHLA, LLGP…KDRN, KALY…RKIT, KPFA…LSYS, and WFNN…ASQA. Position 367 (Glu367) interacts with [CaMn4O5] cluster. The chain crosses the membrane as a helical span at residues 447 to 471; sequence RARAAAAGFEKGIDRDFEPVLSMTP.

The protein belongs to the PsbB/PsbC family. PsbC subfamily. In terms of assembly, PSII is composed of 1 copy each of membrane proteins PsbA, PsbB, PsbC, PsbD, PsbE, PsbF, PsbH, PsbI, PsbJ, PsbK, PsbL, PsbM, PsbT, PsbX, PsbY, PsbZ, Psb30/Ycf12, at least 3 peripheral proteins of the oxygen-evolving complex and a large number of cofactors. It forms dimeric complexes. The cofactor is Binds multiple chlorophylls and provides some of the ligands for the Ca-4Mn-5O cluster of the oxygen-evolving complex. It may also provide a ligand for a Cl- that is required for oxygen evolution. PSII binds additional chlorophylls, carotenoids and specific lipids..

Its subcellular location is the plastid. It localises to the chloroplast thylakoid membrane. In terms of biological role, one of the components of the core complex of photosystem II (PSII). It binds chlorophyll and helps catalyze the primary light-induced photochemical processes of PSII. PSII is a light-driven water:plastoquinone oxidoreductase, using light energy to abstract electrons from H(2)O, generating O(2) and a proton gradient subsequently used for ATP formation. This is Photosystem II CP43 reaction center protein from Gossypium hirsutum (Upland cotton).